A 224-amino-acid chain; its full sequence is tRNA pseudouridine synthase B (224 aa).

Catalysis depends on D46, which acts as the Nucleophile.

It belongs to the pseudouridine synthase TruB family. Type 1 subfamily.

The enzyme catalyses uridine(55) in tRNA = pseudouridine(55) in tRNA. Functionally, responsible for synthesis of pseudouridine from uracil-55 in the psi GC loop of transfer RNAs. The polypeptide is tRNA pseudouridine synthase B (Methylococcus capsulatus (strain ATCC 33009 / NCIMB 11132 / Bath)).